We begin with the raw amino-acid sequence, 217 residues long: Large ribosomal subunit protein uL4 (217 aa).

It belongs to the universal ribosomal protein uL4 family. Part of the 50S ribosomal subunit.

One of the primary rRNA binding proteins, this protein initially binds near the 5'-end of the 23S rRNA. It is important during the early stages of 50S assembly. It makes multiple contacts with different domains of the 23S rRNA in the assembled 50S subunit and ribosome. In terms of biological role, forms part of the polypeptide exit tunnel. This is Large ribosomal subunit protein uL4 from Koribacter versatilis (strain Ellin345).